A 538-amino-acid polypeptide reads, in one-letter code: Cytochrome P450 monooxygenase astC (538 aa).

The chain crosses the membrane as a helical span at residues 18 to 38 (ALMLPALVGCALLIYRAFFAI). C481 provides a ligand contact to heme.

Belongs to the cytochrome P450 family. It depends on heme as a cofactor.

It localises to the membrane. Its pathway is secondary metabolite biosynthesis; terpenoid biosynthesis. Its function is as follows. Cytochrome P450 monooxygenase; part of the gene cluster that mediates the biosynthesis of the sesquiterpenoid aspterric acid (AA), an inhibitor of dihydroxy-acid dehydratase (DHAD) effective as an herbicide. AstC catalyzes the third and last step within the pathway and converts the alpha-epoxy carboxylate intermediate produced by the cytochrome P450 monooxygenase astC from (-)daucane into the tricyclic aspterric acid. This Aspergillus terreus (strain NIH 2624 / FGSC A1156) protein is Cytochrome P450 monooxygenase astC.